The following is a 178-amino-acid chain: MMKNKYSLNEEEIHLFQQSVAGTKRINQDTVLHSPRRKKTSYIAPERIQQEQIDASYYFSDEFQPNLDSEGPTRYVRGDTNHYELKKLRRGDYSPELFLDLHGLTQMQAKQEIGALIAACRREHVYCACIMHGHGKHILKQQTPLWLAQHPDIIAFHQAPKEWGGNAALLILIELDEP.

Residues 99–174 (LDLHGLTQMQ…GNAALLILIE (76 aa)) form the Smr domain.

This sequence belongs to the SmrB family. Associates with collided ribosomes, but not with correctly translating polysomes.

Functionally, acts as a ribosome collision sensor. Detects stalled/collided disomes (pairs of ribosomes where the leading ribosome is stalled and a second ribosome has collided with it) and endonucleolytically cleaves mRNA at the 5' boundary of the stalled ribosome. Stalled/collided disomes form a new interface (primarily via the 30S subunits) that binds SmrB. Cleaved mRNA becomes available for tmRNA ligation, leading to ribosomal subunit dissociation and rescue of stalled ribosomes. The sequence is that of Ribosome rescue factor SmrB from Photorhabdus laumondii subsp. laumondii (strain DSM 15139 / CIP 105565 / TT01) (Photorhabdus luminescens subsp. laumondii).